A 334-amino-acid polypeptide reads, in one-letter code: Ornithine carbamoyltransferase (334 aa).

Residues 57–60 (STRT), Gln-84, Arg-108, and 135–138 (HPTQ) each bind carbamoyl phosphate. L-ornithine-binding positions include Asn-169, Asp-233, and 237–238 (SM). Carbamoyl phosphate is bound by residues 275–276 (CL) and Arg-320.

Belongs to the aspartate/ornithine carbamoyltransferase superfamily. OTCase family.

Its subcellular location is the cytoplasm. The enzyme catalyses carbamoyl phosphate + L-ornithine = L-citrulline + phosphate + H(+). It participates in amino-acid biosynthesis; L-arginine biosynthesis; L-arginine from L-ornithine and carbamoyl phosphate: step 1/3. In terms of biological role, reversibly catalyzes the transfer of the carbamoyl group from carbamoyl phosphate (CP) to the N(epsilon) atom of ornithine (ORN) to produce L-citrulline. This Aliivibrio fischeri (strain ATCC 700601 / ES114) (Vibrio fischeri) protein is Ornithine carbamoyltransferase.